The chain runs to 259 residues: Ribonuclease PH (259 aa).

Residues Arg-88 and 126-128 contribute to the phosphate site; that span reads GTR.

This sequence belongs to the RNase PH family. In terms of assembly, homohexameric ring arranged as a trimer of dimers.

It catalyses the reaction tRNA(n+1) + phosphate = tRNA(n) + a ribonucleoside 5'-diphosphate. Functionally, phosphorolytic 3'-5' exoribonuclease that plays an important role in tRNA 3'-end maturation. Removes nucleotide residues following the 3'-CCA terminus of tRNAs; can also add nucleotides to the ends of RNA molecules by using nucleoside diphosphates as substrates, but this may not be physiologically important. Probably plays a role in initiation of 16S rRNA degradation (leading to ribosome degradation) during starvation. The polypeptide is Ribonuclease PH (Mycobacterium bovis (strain ATCC BAA-935 / AF2122/97)).